Consider the following 564-residue polypeptide: O-fucosyltransferase 6 (564 aa).

The chain crosses the membrane as a helical; Signal-anchor for type II membrane protein span at residues 17–37; it reads LLPFICAVSGALLILFALLSI. Asn-95 and Asn-139 each carry an N-linked (GlcNAc...) asparagine glycan. 277 to 279 contacts substrate; sequence HLR. The N-linked (GlcNAc...) asparagine glycan is linked to Asn-449. Basic and acidic residues predominate over residues 501–512; that stretch reads MDSRKFGKKEQK. The tract at residues 501 to 542 is disordered; sequence MDSRKFGKKEQKEDEDAELSSSETDYEEDQTDLQDRGLYNGT. Positions 513–532 are enriched in acidic residues; sequence EDEDAELSSSETDYEEDQTD. Asn-540 carries N-linked (GlcNAc...) asparagine glycosylation.

This sequence belongs to the glycosyltransferase GT106 family.

It is found in the membrane. The protein operates within glycan metabolism. This Arabidopsis thaliana (Mouse-ear cress) protein is O-fucosyltransferase 6.